The chain runs to 448 residues: Homogentisate 1,2-dioxygenase (448 aa).

H303 serves as the catalytic Proton acceptor. Positions 346 and 352 each coordinate Fe cation. The homogentisate site is built by Y361 and H382. H382 lines the Fe cation pocket.

Belongs to the homogentisate dioxygenase family. Hexamer; dimer of trimers. Fe cation serves as cofactor.

The enzyme catalyses homogentisate + O2 = 4-maleylacetoacetate + H(+). It participates in amino-acid degradation; L-phenylalanine degradation; acetoacetate and fumarate from L-phenylalanine: step 4/6. In terms of biological role, involved in the catabolism of homogentisate (2,5-dihydroxyphenylacetate or 2,5-OH-PhAc), a central intermediate in the degradation of phenylalanine and tyrosine. Catalyzes the oxidative ring cleavage of the aromatic ring of homogentisate to yield maleylacetoacetate. The protein is Homogentisate 1,2-dioxygenase of Rhodopseudomonas palustris (strain ATCC BAA-98 / CGA009).